Here is a 361-residue protein sequence, read N- to C-terminus: Glutamine synthetase (361 aa).

Residues 23–103 (CQAMYIWVDG…VLCETYKYNK (81 aa)) enclose the GS beta-grasp domain. The GS catalytic domain maps to 110-361 (QRWKCMEVMT…LVRTICLNEQ (252 aa)). Glutamate 131 lines the ATP pocket. Glutamate 131, glutamate 133, and glutamate 200 together coordinate Mn(2+). Residue 200-205 (EFQVGP) participates in ATP binding. An L-glutamate-binding site is contributed by 243–244 (DW). Mn(2+) is bound at residue histidine 250. Residues 252–254 (NFS), arginine 316, and arginine 321 contribute to the ATP site. An L-glutamate-binding site is contributed by arginine 316. 333 to 335 (YLE) is an ADP binding site. Residue glutamate 335 participates in Mn(2+) binding. Residue arginine 337 participates in L-glutamate binding.

This sequence belongs to the glutamine synthetase family. Mg(2+) is required as a cofactor. Mn(2+) serves as cofactor.

It is found in the cytoplasm. The protein localises to the cytosol. The protein resides in the microsome. It localises to the mitochondrion. The catalysed reaction is L-glutamate + NH4(+) + ATP = L-glutamine + ADP + phosphate + H(+). In terms of biological role, glutamine synthetase that catalyzes the ATP-dependent conversion of glutamate and ammonia to glutamine. The chain is Glutamine synthetase from Panulirus argus (Caribbean spiny lobster).